Consider the following 118-residue polypeptide: MKRIAFVFSTAPHGSASGREGLDALLATSALTEALGVFFISDGVFQLLPGQKPDAVLARDYIATFKLFDLYDIDQCWICAASLRERGLENINFVVDATPLEPVALRRELGNYDVILRF.

This sequence belongs to the DsrF/TusC family. In terms of assembly, heterohexamer, formed by a dimer of trimers. The hexameric TusBCD complex contains 2 copies each of TusB, TusC and TusD. The TusBCD complex interacts with TusE.

It is found in the cytoplasm. In terms of biological role, part of a sulfur-relay system required for 2-thiolation of 5-methylaminomethyl-2-thiouridine (mnm(5)s(2)U) at tRNA wobble positions. The sequence is that of Protein TusC from Salmonella typhimurium (strain LT2 / SGSC1412 / ATCC 700720).